A 981-amino-acid polypeptide reads, in one-letter code: Isoleucine--tRNA ligase (981 aa).

Positions 50–60 match the 'HIGH' region motif; sequence PTTNGMPHVGH. The short motif at 604–608 is the 'KMSKS' region element; sequence KMSKS. Residue Lys-607 participates in ATP binding.

The protein belongs to the class-I aminoacyl-tRNA synthetase family. IleS type 2 subfamily. As to quaternary structure, monomer. Zn(2+) serves as cofactor.

The protein localises to the cytoplasm. It catalyses the reaction tRNA(Ile) + L-isoleucine + ATP = L-isoleucyl-tRNA(Ile) + AMP + diphosphate. In terms of biological role, catalyzes the attachment of isoleucine to tRNA(Ile). As IleRS can inadvertently accommodate and process structurally similar amino acids such as valine, to avoid such errors it has two additional distinct tRNA(Ile)-dependent editing activities. One activity is designated as 'pretransfer' editing and involves the hydrolysis of activated Val-AMP. The other activity is designated 'posttransfer' editing and involves deacylation of mischarged Val-tRNA(Ile). The protein is Isoleucine--tRNA ligase of Pyrobaculum aerophilum (strain ATCC 51768 / DSM 7523 / JCM 9630 / CIP 104966 / NBRC 100827 / IM2).